The chain runs to 231 residues: Response regulator MprA (231 aa).

Positions Arg4–Leu118 constitute a Response regulatory domain. The residue at position 48 (Asp48) is a 4-aspartylphosphate. The segment at residues Ser130–Glu228 is a DNA-binding region (ompR/PhoB-type).

In terms of processing, phosphorylated and dephosphorylated by MprB.

The protein resides in the cytoplasm. In terms of biological role, member of the two-component regulatory system MprB/MprA which contributes to maintaining a balance among several systems involved in stress resistance and is required for establishment and maintenance of persistent infection in the host. Functions as a transcriptional regulator that recognizes a 19-bp nucleotide motif comprizing two loosely conserved 8-bp direct DNA-binding motif repeats separated by a 3-bp spacer region. This chain is Response regulator MprA (mprA), found in Mycolicibacterium vanbaalenii (strain DSM 7251 / JCM 13017 / BCRC 16820 / KCTC 9966 / NRRL B-24157 / PYR-1) (Mycobacterium vanbaalenii).